The sequence spans 108 residues: Glutaredoxin-like protein YDR286C homolog (108 aa).

C22 and C25 are oxidised to a cystine.

It belongs to the glutaredoxin family. YDR286C subfamily.

This Dictyostelium discoideum (Social amoeba) protein is Glutaredoxin-like protein YDR286C homolog.